Here is a 147-residue protein sequence, read N- to C-terminus: Hemoglobin subunit epsilon (147 aa).

Residues His3–His147 form the Globin domain. Residues His64 and His93 each contribute to the heme b site.

It belongs to the globin family. In terms of assembly, heterotetramer of two epsilon chains and two alpha chains. Hemoglobin E (Hbe) contains a alpha-A chains while hemoglobin M (Hbm) contains alpha-D chains.

Its function is as follows. Beta-type chain found in early embryos. The chain is Hemoglobin subunit epsilon (HBE) from Gallus gallus (Chicken).